Reading from the N-terminus, the 189-residue chain is HGPRTase-like protein (189 aa).

It belongs to the purine/pyrimidine phosphoribosyltransferase family. Archaeal HPRT subfamily.

May catalyze a purine salvage reaction, the substrate is unknown. This chain is HGPRTase-like protein, found in Natronomonas pharaonis (strain ATCC 35678 / DSM 2160 / CIP 103997 / JCM 8858 / NBRC 14720 / NCIMB 2260 / Gabara) (Halobacterium pharaonis).